The following is a 719-amino-acid chain: Lanosterol synthase (719 aa).

A PFTB 1 repeat occupies 118-160; the sequence is RIEVIRYLVNHANPEDGGWGIHIEGKSTVFGTALNYVVLRILG. Asp-451 serves as the catalytic Proton donor. PFTB repeat units lie at residues 478-523, 555-595, and 604-645; these read LKDS…MIEH, VKNA…SCVK, and SRRA…VVQT.

The protein belongs to the terpene cyclase/mutase family.

The catalysed reaction is (S)-2,3-epoxysqualene = lanosterol. It participates in terpene metabolism; lanosterol biosynthesis; lanosterol from farnesyl diphosphate: step 3/3. Functionally, catalyzes the cyclization of (S)-2,3 oxidosqualene to lanosterol, a reaction that forms the sterol nucleus. The chain is Lanosterol synthase (ERG7) from Pneumocystis carinii.